The chain runs to 144 residues: Nucleoside diphosphate kinase (144 aa).

Residues K11, F59, R87, T93, R104, and N114 each coordinate ATP. The Pros-phosphohistidine intermediate role is filled by H117.

Belongs to the NDK family. As to quaternary structure, homotetramer. It depends on Mg(2+) as a cofactor.

It is found in the cytoplasm. The catalysed reaction is a 2'-deoxyribonucleoside 5'-diphosphate + ATP = a 2'-deoxyribonucleoside 5'-triphosphate + ADP. It catalyses the reaction a ribonucleoside 5'-diphosphate + ATP = a ribonucleoside 5'-triphosphate + ADP. In terms of biological role, major role in the synthesis of nucleoside triphosphates other than ATP. The ATP gamma phosphate is transferred to the NDP beta phosphate via a ping-pong mechanism, using a phosphorylated active-site intermediate. In Coxiella burnetii (strain CbuG_Q212) (Coxiella burnetii (strain Q212)), this protein is Nucleoside diphosphate kinase.